The primary structure comprises 643 residues: Probable potassium transport system protein Kup (643 aa).

Over residues 1-12 (MSISSKTEDSDI) the composition is skewed to basic and acidic residues. Positions 1–20 (MSISSKTEDSDIRSSVMTDH) are disordered. 12 consecutive transmembrane segments (helical) span residues 28 to 48 (LAGL…TSPL), 65 to 85 (AGNV…IVGL), 121 to 141 (WLLV…GMIT), 158 to 178 (PAFH…LFLF), 187 to 207 (GALF…LGII), 224 to 244 (GISF…AVFL), 268 to 288 (WFLL…ALLL), 301 to 321 (LVPS…TIIA), 358 to 378 (IYVP…VAWF), 384 to 404 (LAAA…ILFY), 415 to 435 (PAAL…FFGA), and 440 to 460 (LFHG…IMNT).

It belongs to the HAK/KUP transporter (TC 2.A.72) family.

It is found in the cell inner membrane. The catalysed reaction is K(+)(in) + H(+)(in) = K(+)(out) + H(+)(out). Functionally, transport of potassium into the cell. Likely operates as a K(+):H(+) symporter. The polypeptide is Probable potassium transport system protein Kup (Chlorobium luteolum (strain DSM 273 / BCRC 81028 / 2530) (Pelodictyon luteolum)).